We begin with the raw amino-acid sequence, 1138 residues long: MAGELVSFAVNKLWDLLSHEYTLFQGVEDQVAELKSDLNLLKSFLKDADAKKHTSALVRYCVEEIKDIVYDAEDVLETFVQKEKLGTTSGIRKHIKRLTCIVPDRREIALYIGHVSKRITRVIRDMQSFGVQQMIVDDYMHPLRNREREIRRTFPKDNESGFVALEENVKKLVGYFVEEDNYQVVSITGMGGLGKTTLARQVFNHDMVTKKFDKLAWVSVSQDFTLKNVWQNILGDLKPKEEETKEEEKKILEMTEYTLQRELYQLLEMSKSLIVLDDIWKKEDWEVIKPIFPPTKGWKLLLTSRNESIVAPTNTKYFNFKPECLKTDDSWKLFQRIAFPINDASEFEIDEEMEKLGEKMIEHCGGLPLAIKVLGGMLAEKYTSHDWRRLSENIGSHLVGGRTNFNDDNNNSCNYVLSLSFEELPSYLKHCFLYLAHFPEDYEIKVENLSYYWAAEEIFQPRHYDGEIIRDVGDVYIEELVRRNMVISERDVKTSRFETCHLHDMMREVCLLKAKEENFLQITSNPPSTANFQSTVTSRRLVYQYPTTLHVEKDINNPKLRSLVVVTLGSWNMAGSSFTRLELLRVLDLVQAKLKGGKLASCIGKLIHLRYLSLEYAEVTHIPYSLGNLKLLIYLNLHISLSSRSNFVPNVLMGMQELRYLALPSLIERKTKLELSNLVKLETLENFSTKNSSLEDLRGMVRLRTLTIELIEETSLETLAASIGGLKYLEKLEIDDLGSKMRTKEAGIVFDFVHLKRLRLELYMPRLSKEQHFPSHLTTLYLQHCRLEEDPMPILEKLLQLKELELGHKSFSGKKMVCSSCGFPQLQKLSISGLKEWEDWKVEESSMPLLLTLNIFDCRKLKQLPDEHLPSHLTAISLKKCGLEDPIPTLERLVHLKELSLSELCGRIMVCTGGGFPQLHKLDLSELDGLEEWIVEDGSMPRLHTLEIRRCLKLKKLPNGFPQLQNLHLTEVEEWEEGMIVKQGSMPLLHTLYIWHCPKLPGEQHFPSHLTTVFLLGMYVEEDPMRILEKLLHLKNVSLFQSFSGKRMVCSGGGFPQLQKLSIREIEWEEWIVEQGSMPLLHTLYIGVCPNLKELPDGLRFIYSLKNLIVSKRWKKRLSEGGEDYYKVQHIPSVEFDD.

Residues 166–422 (EENVKKLVGY…CNYVLSLSFE (257 aa)) form the NB-ARC domain. Residue 189-196 (GMGGLGKT) participates in ATP binding. LRR repeat units lie at residues 544–565 (QYPTTLHVEKDINNPKLRSLVV), 566–581 (VTLGSWNMAGSSFTRL), 582–606 (ELLRVLDLVQAKLKGGKLASCIGKL), 607–631 (IHLRYLSLEYAEVTHIPYSLGNLKL), 655–680 (MQELRYLALPSLIERKTKLELSNLVK), 681–705 (LETLENFSTKNSSLEDLRGMVRLRT), 707–726 (TIELIEETSLETLAASIGGL), 727–752 (KYLEKLEIDDLGSKMRTKEAGIVFDF), 754–774 (HLKRLRLELYMPRLSKEQHFP), 775–797 (SHLTTLYLQHCRLEEDPMPILEK), 798–825 (LLQLKELELGHKSFSGKKMVCSSCGFPQ), 847–871 (MPLLLTLNIFDCRKLKQLPDEHLPS), 873–893 (LTAISLKKCGLEDPIPTLERL), 894–918 (VHLKELSLSELCGRIMVCTGGGFPQ), 940–963 (MPRLHTLEIRRCLKLKKLPNGFPQ), 1028–1050 (LEKLLHLKNVSLFQSFSGKRMVC), 1055–1078 (FPQLQKLSIREIEWEEWIVEQGSM), 1079–1103 (PLLHTLYIGVCPNLKELPDGLRFIY), and 1115–1138 (KKRLSEGGEDYYKVQHIPSVEFDD).

This sequence belongs to the disease resistance NB-LRR family.

In terms of biological role, disease resistance protein required for incompatible interactions with avirulent strains of Hyaloperonospora arabidopsidis (downy mildew), isolate Hpa-Hiks1 in cv. Columbia. The polypeptide is Protein RECOGNITION OF PERONOSPORA PARASITICA 7 (Arabidopsis thaliana (Mouse-ear cress)).